Reading from the N-terminus, the 132-residue chain is Small ribosomal subunit protein uS8 (132 aa).

Belongs to the universal ribosomal protein uS8 family. As to quaternary structure, part of the 30S ribosomal subunit. Contacts proteins S5 and S12.

In terms of biological role, one of the primary rRNA binding proteins, it binds directly to 16S rRNA central domain where it helps coordinate assembly of the platform of the 30S subunit. In Clostridium perfringens (strain ATCC 13124 / DSM 756 / JCM 1290 / NCIMB 6125 / NCTC 8237 / Type A), this protein is Small ribosomal subunit protein uS8.